A 386-amino-acid chain; its full sequence is MTTTLTNLLDLDPAQLIAYCGELGEKPFRAKQLQRWIHQFGASDFDAMTDLAKSLRDKLKTRAMIAAPAVISDHTSSDGTRKWLIDVGQGNAVETVFIPEENRGTLCISTQAGCAVNCRFCSTGKQGFNRNLSVGEIIGQLWMAEFELRRTKGIEPGPKGERQITNVVMMGMGEPLLNYEPTVTALKLMLDDNAYGLSRRRVTLSTSGVVPMIDKLSQDCAVALAVSLHASNDALRDGLVPLNKKYPLQELMAACKRYLEFAPRDFVTFEYCMLDGVNDSDQHARELLTLVRDVPCKFNLIPFNPFPESGLTRSNNPRIKAFAQVLMDGGLVTTIRKTRGDDIDAACGQLAGEVQDRTRVQDRMKKMAEYQEKFGKNFGRIVEIPS.

E94 serves as the catalytic Proton acceptor. The Radical SAM core domain maps to 100 to 341 (EENRGTLCIS…VTTIRKTRGD (242 aa)). An intrachain disulfide couples C107 to C347. Residues C114, C118, and C121 each contribute to the [4Fe-4S] cluster site. S-adenosyl-L-methionine is bound by residues 173–174 (GE), S205, 227–229 (SLH), and N304. C347 (S-methylcysteine intermediate) is an active-site residue.

Belongs to the radical SAM superfamily. RlmN family. It depends on [4Fe-4S] cluster as a cofactor.

The protein resides in the cytoplasm. It carries out the reaction adenosine(2503) in 23S rRNA + 2 reduced [2Fe-2S]-[ferredoxin] + 2 S-adenosyl-L-methionine = 2-methyladenosine(2503) in 23S rRNA + 5'-deoxyadenosine + L-methionine + 2 oxidized [2Fe-2S]-[ferredoxin] + S-adenosyl-L-homocysteine. It catalyses the reaction adenosine(37) in tRNA + 2 reduced [2Fe-2S]-[ferredoxin] + 2 S-adenosyl-L-methionine = 2-methyladenosine(37) in tRNA + 5'-deoxyadenosine + L-methionine + 2 oxidized [2Fe-2S]-[ferredoxin] + S-adenosyl-L-homocysteine. Its function is as follows. Specifically methylates position 2 of adenine 2503 in 23S rRNA and position 2 of adenine 37 in tRNAs. m2A2503 modification seems to play a crucial role in the proofreading step occurring at the peptidyl transferase center and thus would serve to optimize ribosomal fidelity. The sequence is that of Dual-specificity RNA methyltransferase RlmN from Herminiimonas arsenicoxydans.